Reading from the N-terminus, the 81-residue chain is Lantipeptide prochlorosin 1.1 (81 aa).

Residues 1-65 (MSEEQLKAFI…DDDLEGVAGG (65 aa)) constitute a propeptide that is removed on maturation. A cross-link (beta-methyllanthionine (Cys-Thr)) is located at residues 68–72 (CVQGT). A cross-link (beta-methyllanthionine (Thr-Cys)) is located at residues 77–81 (TINVC).

Cross-links are proved in vitro, when coepressed in E.coli with the ProcM lanthionine synthetase. Post-translationally, the beta-methyllanthionine residues have a DL configuration (with 2S,3S,6R stereochemistry). In terms of processing, maturation of prochlorosin involves the enzymatic conversion of Thr, and Ser into dehydrated AA and the formation of thioether bonds with cysteines. This is followed by membrane translocation and cleavage of the modified precursor.

The protein resides in the secreted. Lanthionine-containing peptide (lantipeptide) with unknown function. Does not show antibiotic activity against Lactococcus lactis 117 and Bacillus subtilis 6633 bacteria. Organisms that produce this peptide live in oligotrophic environments at very dilute concentrations, suggesting this peptide is not secreted to influence other bacteria. In Prochlorococcus marinus (strain MIT 9313), this protein is Lantipeptide prochlorosin 1.1.